The following is a 353-amino-acid chain: 3-isopropylmalate dehydrogenase (353 aa).

NAD(+) is bound at residue 76 to 89; it reads GPKWDDPRAKVRPE. Arg96, Arg106, Arg134, and Asp223 together coordinate substrate. The Mg(2+) site is built by Asp223, Asp247, and Asp251. 281-293 is a binding site for NAD(+); the sequence is GSAPDIAGKGIAN.

The protein belongs to the isocitrate and isopropylmalate dehydrogenases family. LeuB type 1 subfamily. In terms of assembly, homodimer. Requires Mg(2+) as cofactor. It depends on Mn(2+) as a cofactor.

The protein resides in the cytoplasm. The enzyme catalyses (2R,3S)-3-isopropylmalate + NAD(+) = 4-methyl-2-oxopentanoate + CO2 + NADH. It functions in the pathway amino-acid biosynthesis; L-leucine biosynthesis; L-leucine from 3-methyl-2-oxobutanoate: step 3/4. Catalyzes the oxidation of 3-carboxy-2-hydroxy-4-methylpentanoate (3-isopropylmalate) to 3-carboxy-4-methyl-2-oxopentanoate. The product decarboxylates to 4-methyl-2 oxopentanoate. The polypeptide is 3-isopropylmalate dehydrogenase (Anaeromyxobacter dehalogenans (strain 2CP-C)).